The sequence spans 53 residues: Rubredoxin (53 aa).

Residues 1 to 53 (MTKYVCTVCGYVYDPEVGDPDNNINPGTSFQDIPEDWVCPLCGVGKDQFEEEA) enclose the Rubredoxin-like domain. Fe cation is bound by residues Cys6, Cys9, Cys39, and Cys42.

The protein belongs to the rubredoxin family. The cofactor is Fe(3+).

In terms of biological role, rubredoxin is a small nonheme, iron protein lacking acid-labile sulfide. Its single Fe, chelated to 4 Cys, functions as an electron acceptor and may also stabilize the conformation of the molecule. The sequence is that of Rubredoxin from Acetoanaerobium sticklandii (strain ATCC 12662 / DSM 519 / JCM 1433 / CCUG 9281 / NCIMB 10654 / HF) (Clostridium sticklandii).